The following is a 124-amino-acid chain: Large ribosomal subunit protein uL18 (124 aa).

Belongs to the universal ribosomal protein uL18 family. Part of the 50S ribosomal subunit; part of the 5S rRNA/L5/L18/L25 subcomplex. Contacts the 5S and 23S rRNAs.

Its function is as follows. This is one of the proteins that bind and probably mediate the attachment of the 5S RNA into the large ribosomal subunit, where it forms part of the central protuberance. The protein is Large ribosomal subunit protein uL18 of Desulfosudis oleivorans (strain DSM 6200 / JCM 39069 / Hxd3) (Desulfococcus oleovorans).